Here is a 699-residue protein sequence, read N- to C-terminus: tRNA 5-methylaminomethyl-2-thiouridine biosynthesis bifunctional protein MnmC (699 aa).

Residues 1–260 (MTAKPQKSCQ…ERKLLRQQAD (260 aa)) are tRNA (mnm(5)s(2)U34)-methyltransferase. The segment at 282 to 699 (VGGGLASANL…LRKLLKGKAL (418 aa)) is FAD-dependent cmnm(5)s(2)U34 oxidoreductase.

In the N-terminal section; belongs to the methyltransferase superfamily. tRNA (mnm(5)s(2)U34)-methyltransferase family. This sequence in the C-terminal section; belongs to the DAO family. FAD serves as cofactor.

It localises to the cytoplasm. The enzyme catalyses 5-aminomethyl-2-thiouridine(34) in tRNA + S-adenosyl-L-methionine = 5-methylaminomethyl-2-thiouridine(34) in tRNA + S-adenosyl-L-homocysteine + H(+). Its function is as follows. Catalyzes the last two steps in the biosynthesis of 5-methylaminomethyl-2-thiouridine (mnm(5)s(2)U) at the wobble position (U34) in tRNA. Catalyzes the FAD-dependent demodification of cmnm(5)s(2)U34 to nm(5)s(2)U34, followed by the transfer of a methyl group from S-adenosyl-L-methionine to nm(5)s(2)U34, to form mnm(5)s(2)U34. In Shewanella sp. (strain MR-4), this protein is tRNA 5-methylaminomethyl-2-thiouridine biosynthesis bifunctional protein MnmC.